The following is a 145-amino-acid chain: D-aminoacyl-tRNA deacylase (145 aa).

The short motif at 137 to 138 (GP) is the Gly-cisPro motif, important for rejection of L-amino acids element.

The protein belongs to the DTD family. Homodimer.

Its subcellular location is the cytoplasm. It catalyses the reaction glycyl-tRNA(Ala) + H2O = tRNA(Ala) + glycine + H(+). The catalysed reaction is a D-aminoacyl-tRNA + H2O = a tRNA + a D-alpha-amino acid + H(+). An aminoacyl-tRNA editing enzyme that deacylates mischarged D-aminoacyl-tRNAs. Also deacylates mischarged glycyl-tRNA(Ala), protecting cells against glycine mischarging by AlaRS. Acts via tRNA-based rather than protein-based catalysis; rejects L-amino acids rather than detecting D-amino acids in the active site. By recycling D-aminoacyl-tRNA to D-amino acids and free tRNA molecules, this enzyme counteracts the toxicity associated with the formation of D-aminoacyl-tRNA entities in vivo and helps enforce protein L-homochirality. The polypeptide is D-aminoacyl-tRNA deacylase (Rhodococcus opacus (strain B4)).